The chain runs to 334 residues: L-lactate dehydrogenase B chain (334 aa).

NAD(+) is bound by residues 30 to 58 (GQVG…MEDR) and Arg-100. Substrate-binding residues include Arg-107, Asn-139, and Arg-170. Asn-139 serves as a coordination point for NAD(+). His-194 (proton acceptor) is an active-site residue. Thr-249 is a substrate binding site.

Belongs to the LDH/MDH superfamily. LDH family. In terms of assembly, homotetramer.

It localises to the cytoplasm. The catalysed reaction is (S)-lactate + NAD(+) = pyruvate + NADH + H(+). It participates in fermentation; pyruvate fermentation to lactate; (S)-lactate from pyruvate: step 1/1. Its function is as follows. Interconverts simultaneously and stereospecifically pyruvate and lactate with concomitant interconversion of NADH and NAD(+). The sequence is that of L-lactate dehydrogenase B chain (ldhb) from Fundulus heteroclitus (Killifish).